The primary structure comprises 352 residues: Photosystem II D2 protein (352 aa).

Residues 40 to 60 (CAYLALGGWLTGTTFVTSWYT) traverse the membrane as a helical segment. Chlorophyll a is bound at residue His117. Residues 124–140 (GFMLRQFEIARLVGVRP) traverse the membrane as a helical segment. Gln129 and Asn142 together coordinate pheophytin a. The chain crosses the membrane as a helical span at residues 152–165 (VFVSVFLIYPLGQS). His197 is a binding site for chlorophyll a. Residues 207–227 (GALLCAIHGATVENTLFQDGE) traverse the membrane as a helical segment. Residues His214 and Phe261 each coordinate a plastoquinone. Residue His214 coordinates Fe cation. Residue His268 participates in Fe cation binding. The chain crosses the membrane as a helical span at residues 278-294 (GLWMSSIGVVGLALNLR).

The protein belongs to the reaction center PufL/M/PsbA/D family. As to quaternary structure, PSII is composed of 1 copy each of membrane proteins PsbA, PsbB, PsbC, PsbD, PsbE, PsbF, PsbH, PsbI, PsbJ, PsbK, PsbL, PsbM, PsbT, PsbX, PsbY, PsbZ, Psb30/Ycf12, peripheral proteins PsbO, CyanoQ (PsbQ), PsbU, PsbV and a large number of cofactors. It forms dimeric complexes. The D1/D2 heterodimer binds P680, chlorophylls that are the primary electron donor of PSII, and subsequent electron acceptors. It shares a non-heme iron and each subunit binds pheophytin, quinone, additional chlorophylls, carotenoids and lipids. There is also a Cl(-1) ion associated with D1 and D2, which is required for oxygen evolution. The PSII complex binds additional chlorophylls, carotenoids and specific lipids. serves as cofactor.

The protein localises to the cellular thylakoid membrane. The enzyme catalyses 2 a plastoquinone + 4 hnu + 2 H2O = 2 a plastoquinol + O2. Its function is as follows. Photosystem II (PSII) is a light-driven water:plastoquinone oxidoreductase that uses light energy to abstract electrons from H(2)O, generating O(2) and a proton gradient subsequently used for ATP formation. It consists of a core antenna complex that captures photons, and an electron transfer chain that converts photonic excitation into a charge separation. The D1/D2 (PsbA/PsbD) reaction center heterodimer binds P680, the primary electron donor of PSII as well as several subsequent electron acceptors. D2 is needed for assembly of a stable PSII complex. The chain is Photosystem II D2 protein from Synechococcus sp. (strain JA-2-3B'a(2-13)) (Cyanobacteria bacterium Yellowstone B-Prime).